The primary structure comprises 1323 residues: DNA-directed RNA polymerase subunit beta' (1323 aa).

4 residues coordinate Zn(2+): Cys60, Cys62, Cys75, and Cys78. Residues Asp535, Asp537, and Asp539 each coordinate Mg(2+). Zn(2+) contacts are provided by Cys894, Cys977, Cys984, and Cys987.

The protein belongs to the RNA polymerase beta' chain family. As to quaternary structure, the RNAP catalytic core consists of 2 alpha, 1 beta, 1 beta' and 1 omega subunit. When a sigma factor is associated with the core the holoenzyme is formed, which can initiate transcription. Mg(2+) serves as cofactor. Zn(2+) is required as a cofactor.

It catalyses the reaction RNA(n) + a ribonucleoside 5'-triphosphate = RNA(n+1) + diphosphate. Functionally, DNA-dependent RNA polymerase catalyzes the transcription of DNA into RNA using the four ribonucleoside triphosphates as substrates. In Corynebacterium urealyticum (strain ATCC 43042 / DSM 7109), this protein is DNA-directed RNA polymerase subunit beta'.